Reading from the N-terminus, the 227-residue chain is Phosphoribosylformylglycinamidine synthase subunit PurQ (227 aa).

In terms of domain architecture, Glutamine amidotransferase type-1 spans 3 to 227 (FAVIVFPGSN…NWRESHVTAS (225 aa)). Cys86 (nucleophile) is an active-site residue. Active-site residues include His194 and Glu196.

As to quaternary structure, part of the FGAM synthase complex composed of 1 PurL, 1 PurQ and 2 PurS subunits.

Its subcellular location is the cytoplasm. It carries out the reaction N(2)-formyl-N(1)-(5-phospho-beta-D-ribosyl)glycinamide + L-glutamine + ATP + H2O = 2-formamido-N(1)-(5-O-phospho-beta-D-ribosyl)acetamidine + L-glutamate + ADP + phosphate + H(+). It catalyses the reaction L-glutamine + H2O = L-glutamate + NH4(+). It functions in the pathway purine metabolism; IMP biosynthesis via de novo pathway; 5-amino-1-(5-phospho-D-ribosyl)imidazole from N(2)-formyl-N(1)-(5-phospho-D-ribosyl)glycinamide: step 1/2. Its function is as follows. Part of the phosphoribosylformylglycinamidine synthase complex involved in the purines biosynthetic pathway. Catalyzes the ATP-dependent conversion of formylglycinamide ribonucleotide (FGAR) and glutamine to yield formylglycinamidine ribonucleotide (FGAM) and glutamate. The FGAM synthase complex is composed of three subunits. PurQ produces an ammonia molecule by converting glutamine to glutamate. PurL transfers the ammonia molecule to FGAR to form FGAM in an ATP-dependent manner. PurS interacts with PurQ and PurL and is thought to assist in the transfer of the ammonia molecule from PurQ to PurL. This is Phosphoribosylformylglycinamidine synthase subunit PurQ from Shouchella clausii (strain KSM-K16) (Alkalihalobacillus clausii).